A 737-amino-acid polypeptide reads, in one-letter code: Polyribonucleotide nucleotidyltransferase (737 aa).

Mg(2+) contacts are provided by Asp-489 and Asp-495. The 60-residue stretch at 556-615 (PKIDTIKIDVDKIKIVIGKGGETIDKIIAETGVKIDIDEEGNVSIYSSDQDAINRAKEII) folds into the KH domain. Positions 625-693 (DEVYRAKVVR…EKGRIDASMK (69 aa)) constitute an S1 motif domain. Residues 691–737 (SMKALLPRPPKPEHDEKGEKSERPHRPRHHKDHKPKKEFTETPKDSE) form a disordered region. A compositionally biased stretch (basic and acidic residues) spans 700 to 714 (PKPEHDEKGEKSERP). Basic residues predominate over residues 715–724 (HRPRHHKDHK). Positions 725–737 (PKKEFTETPKDSE) are enriched in basic and acidic residues.

This sequence belongs to the polyribonucleotide nucleotidyltransferase family. Requires Mg(2+) as cofactor.

It localises to the cytoplasm. It carries out the reaction RNA(n+1) + phosphate = RNA(n) + a ribonucleoside 5'-diphosphate. In terms of biological role, involved in mRNA degradation. Catalyzes the phosphorolysis of single-stranded polyribonucleotides processively in the 3'- to 5'-direction. In Streptococcus pneumoniae (strain Taiwan19F-14), this protein is Polyribonucleotide nucleotidyltransferase.